We begin with the raw amino-acid sequence, 152 residues long: Protein SprT-like (152 aa).

A SprT-like domain is found at 7-147 (QRLVEEVSLQ…CGKCKGKLKP (141 aa)). Residue histidine 67 participates in Zn(2+) binding. Glutamate 68 is an active-site residue. Residue histidine 71 coordinates Zn(2+).

The protein belongs to the SprT family. Zn(2+) is required as a cofactor.

The protein localises to the cytoplasm. This chain is Protein SprT-like, found in Bacillus cereus (strain G9842).